We begin with the raw amino-acid sequence, 390 residues long: Adherens junction-associated protein 1 (390 aa).

The N-terminal stretch at methionine 1–serine 37 is a signal peptide. Residues glutamate 38–glutamine 262 are Extracellular-facing. The tract at residues leucine 218–asparagine 253 is disordered. The helical transmembrane segment at isoleucine 263–leucine 283 threads the bilayer. The tract at residues leucine 283 to cysteine 390 is targeting signals. The Cytoplasmic portion of the chain corresponds to lysine 284 to cysteine 390.

The protein resides in the basolateral cell membrane. Its subcellular location is the apical cell membrane. It is found in the cell junction. The protein localises to the adherens junction. Functionally, may play a role in cell adhesion and cell migration. The sequence is that of Adherens junction-associated protein 1 (ajap1) from Xenopus tropicalis (Western clawed frog).